Here is a 576-residue protein sequence, read N- to C-terminus: Arginine--tRNA ligase (576 aa).

The 'HIGH' region signature appears at 122–132; that stretch reads PNVAKQMHVGH.

The protein belongs to the class-I aminoacyl-tRNA synthetase family. In terms of assembly, monomer.

It localises to the cytoplasm. The catalysed reaction is tRNA(Arg) + L-arginine + ATP = L-arginyl-tRNA(Arg) + AMP + diphosphate. The protein is Arginine--tRNA ligase of Yersinia pseudotuberculosis serotype O:1b (strain IP 31758).